The following is a 332-amino-acid chain: Adenosine deaminase (332 aa).

The Zn(2+) site is built by His12 and His14. His14, Asp16, and Gly170 together coordinate substrate. Residue His197 participates in Zn(2+) binding. The Proton donor role is filled by Glu200. A Zn(2+)-binding site is contributed by Asp278. Asp279 is a substrate binding site.

Belongs to the metallo-dependent hydrolases superfamily. Adenosine and AMP deaminases family. Adenosine deaminase subfamily. It depends on Zn(2+) as a cofactor.

The catalysed reaction is adenosine + H2O + H(+) = inosine + NH4(+). The enzyme catalyses 2'-deoxyadenosine + H2O + H(+) = 2'-deoxyinosine + NH4(+). Functionally, catalyzes the hydrolytic deamination of adenosine and 2-deoxyadenosine. This chain is Adenosine deaminase, found in Serratia proteamaculans (strain 568).